The primary structure comprises 355 residues: Phenylalanine--tRNA ligase alpha subunit (355 aa).

Residue glutamate 273 coordinates Mg(2+).

It belongs to the class-II aminoacyl-tRNA synthetase family. Phe-tRNA synthetase alpha subunit type 1 subfamily. As to quaternary structure, tetramer of two alpha and two beta subunits. Mg(2+) is required as a cofactor.

The protein resides in the cytoplasm. It catalyses the reaction tRNA(Phe) + L-phenylalanine + ATP = L-phenylalanyl-tRNA(Phe) + AMP + diphosphate + H(+). In Bifidobacterium longum subsp. infantis (strain ATCC 15697 / DSM 20088 / JCM 1222 / NCTC 11817 / S12), this protein is Phenylalanine--tRNA ligase alpha subunit.